Here is a 494-residue protein sequence, read N- to C-terminus: Protein translocase subunit SecD (494 aa).

6 helical membrane-spanning segments follow: residues 7–27, 322–342, 345–365, 372–392, 420–440, and 441–461; these read WFAL…NLPF, LIAA…FYRL, FIAI…YALI, PGVA…VLIF, IIDG…LGTG, and FVKG…FTAL.

The protein belongs to the SecD/SecF family. SecD subfamily. In terms of assembly, forms a complex with SecF. Part of the essential Sec protein translocation apparatus which comprises SecA, SecYEG and auxiliary proteins SecDF. Other proteins may also be involved.

Its subcellular location is the cell inner membrane. Part of the Sec protein translocase complex. Interacts with the SecYEG preprotein conducting channel. SecDF uses the proton motive force (PMF) to complete protein translocation after the ATP-dependent function of SecA. Functionally, probably participates in protein translocation into and across both the cytoplasmic and thylakoid membranes in cyanobacterial cells. In Prochlorococcus marinus (strain SARG / CCMP1375 / SS120), this protein is Protein translocase subunit SecD.